An 884-amino-acid chain; its full sequence is Probable leucine-rich repeat receptor-like protein kinase At2g28990 (884 aa).

The signal sequence occupies residues 1-19; that stretch reads MKIHLLLAMIGTFVVIIGA. Over 20–508 the chain is Extracellular; sequence QDQEGFISLD…TEKKNKFLLP (489 aa). Asn-70, Asn-177, Asn-217, Asn-231, Asn-251, Asn-284, Asn-298, Asn-334, Asn-418, Asn-427, Asn-438, Asn-459, and Asn-464 each carry an N-linked (GlcNAc...) asparagine glycan. LRR repeat units follow at residues 404 to 427, 428 to 451, and 452 to 476; these read SPTI…ILQN, FTQL…FLAN, and MKTL…LLDK. The chain crosses the membrane as a helical span at residues 509–529; that stretch reads VIASAASLVIVVVVVALFFVF. Residues 530–884 lie on the Cytoplasmic side of the membrane; sequence RKKKASPSNL…IYNEVIPQAR (355 aa). Residues 535 to 559 are disordered; it reads SPSNLHAPPSMPVSNPGHNSQSESS. Over residues 546–559 the composition is skewed to polar residues; sequence PVSNPGHNSQSESS. The residue at position 568 (Thr-568) is a Phosphothreonine. One can recognise a Protein kinase domain in the interval 577–850; it reads NNFDKALGEG…RVVNELKECL (274 aa). Residues 583–591 and Lys-605 each bind ATP; that span reads LGEGGFGVV. At Tyr-650 the chain carries Phosphotyrosine. The Proton acceptor role is filled by Asp-702. Residue Ser-736 is modified to Phosphoserine. Phosphothreonine is present on residues Thr-737 and Thr-742. Tyr-750 carries the phosphotyrosine modification.

This sequence belongs to the protein kinase superfamily. Ser/Thr protein kinase family. As to quaternary structure, binds to the ammonium transporter AMT1-1.

It is found in the membrane. The catalysed reaction is L-seryl-[protein] + ATP = O-phospho-L-seryl-[protein] + ADP + H(+). It carries out the reaction L-threonyl-[protein] + ATP = O-phospho-L-threonyl-[protein] + ADP + H(+). This Arabidopsis thaliana (Mouse-ear cress) protein is Probable leucine-rich repeat receptor-like protein kinase At2g28990.